Here is an 88-residue protein sequence, read N- to C-terminus: MIAKSIKAEIVKDNARSALDTGSPEVQVGLLTGRINELMPHFKTHAKDHHGRRGLLRMVSRRRKLLDYLKSKDASRYVALIAKLGLRK.

This sequence belongs to the universal ribosomal protein uS15 family. Part of the 30S ribosomal subunit. Forms a bridge to the 50S subunit in the 70S ribosome, contacting the 23S rRNA.

Functionally, one of the primary rRNA binding proteins, it binds directly to 16S rRNA where it helps nucleate assembly of the platform of the 30S subunit by binding and bridging several RNA helices of the 16S rRNA. In terms of biological role, forms an intersubunit bridge (bridge B4) with the 23S rRNA of the 50S subunit in the ribosome. This Polaromonas naphthalenivorans (strain CJ2) protein is Small ribosomal subunit protein uS15.